Consider the following 360-residue polypeptide: DNA polymerase IV (360 aa).

In terms of domain architecture, UmuC spans 8–189 (IIHVDMDCFF…LPLEKIPGVG (182 aa)). Residues Asp12 and Asp107 each coordinate Mg(2+). The active site involves Glu108.

It belongs to the DNA polymerase type-Y family. As to quaternary structure, monomer. Requires Mg(2+) as cofactor.

It is found in the cytoplasm. The catalysed reaction is DNA(n) + a 2'-deoxyribonucleoside 5'-triphosphate = DNA(n+1) + diphosphate. In terms of biological role, poorly processive, error-prone DNA polymerase involved in untargeted mutagenesis. Copies undamaged DNA at stalled replication forks, which arise in vivo from mismatched or misaligned primer ends. These misaligned primers can be extended by PolIV. Exhibits no 3'-5' exonuclease (proofreading) activity. May be involved in translesional synthesis, in conjunction with the beta clamp from PolIII. The sequence is that of DNA polymerase IV from Vibrio cholerae serotype O1 (strain ATCC 39541 / Classical Ogawa 395 / O395).